The following is a 2128-amino-acid chain: Non-reducing polyketide synthase albA (2128 aa).

The interval 8–244 (YLFGDQTSDI…VKAPIHGPYH (237 aa)) is N-terminal acylcarrier protein transacylase domain (SAT). Residues 375–806 (NSKIAIIGMS…GGNTALLLED (432 aa)) enclose the Ketosynthase family 3 (KS3) domain. Residues cysteine 547, histidine 682, and histidine 724 each act as for beta-ketoacyl synthase activity in the active site. The interval 912-1232 (FVFTGQGAQY…LASLHLAGID (321 aa)) is malonyl-CoA:ACP transacylase (MAT) domain. Serine 1001 functions as the For acyl/malonyl transferase activity in the catalytic mechanism. Positions 1286–1425 (HEYLTTAAQK…CTVRFFDCAA (140 aa)) are N-terminal hotdog fold. Residues 1286–1598 (HEYLTTAAQK…FQALSRKILD (313 aa)) enclose the PKS/mFAS DH domain. Residues 1290 to 1603 (TTAAQKVIET…RKILDTVLPP (314 aa)) form a product template (PT) domain region. The active-site Proton acceptor; for dehydratase activity is histidine 1326. Positions 1452–1598 (DAHRLGRGMV…FQALSRKILD (147 aa)) are C-terminal hotdog fold. Residue aspartate 1511 is the Proton donor; for dehydratase activity of the active site. The region spanning 1618–1695 (PSAPSLVKRA…DFKQFLAPMS (78 aa)) is the Carrier 1 domain. The residue at position 1655 (serine 1655) is an O-(pantetheine 4'-phosphoryl)serine. Residues 1695–1740 (SQGEASDGSTSDPESSSSFNGGSSTDESSAGSPVSSPPNEKVTQVE) form a disordered region. The segment covering 1700-1723 (SDGSTSDPESSSSFNGGSSTDESS) has biased composition (low complexity). Polar residues predominate over residues 1724-1740 (AGSPVSSPPNEKVTQVE). Residues 1739–1816 (VEQHATIKEI…DVEDALGLKP (78 aa)) enclose the Carrier 2 domain. Position 1776 is an O-(pantetheine 4'-phosphoryl)serine (serine 1776). The interval 1854–2126 (SPHPRSTSIL…ELGSFIGNAM (273 aa)) is claisen cyclase domain. Residue serine 1944 is the For Claisen cyclase activity of the active site.

The catalysed reaction is 6 malonyl-CoA + acetyl-CoA + 6 H(+) = naphtopyrone YWA1 + 6 CO2 + 7 CoA + H2O. The protein operates within secondary metabolite biosynthesis. In terms of biological role, non-reducing polyketide synthase; part of the gene cluster that mediates the biosynthesis of aurasperone B, a dimeric gamma-naphthopyrone. The first step in the biosynthesis of aurasperone B is the production of gamma-naphthopyrone precursor YWA1 by the non-reducing polyketide synthase albA, via condensation of one acetyl-CoA starter unit with 6 malonyl-CoA units. YWA1 is then methylated by aunE at position C-6 to yield foncesin which is further methylated at position C-8 by aunD to produce fonsecin B. A key enzyme in the biosynthetic pathway is the cytochrome P450 monooxygenase aunB which catalyzes the oxidative dimerization of fonsecin B to aurasperone B. AunB also catalyzes the oxidative dimerization of rubrofusarin B into aurasperone A. This is Non-reducing polyketide synthase albA from Aspergillus niger (strain ATCC 1015 / CBS 113.46 / FGSC A1144 / LSHB Ac4 / NCTC 3858a / NRRL 328 / USDA 3528.7).